The primary structure comprises 600 residues: Forkhead box protein O (600 aa).

T49 carries the phosphothreonine; by PKB/AKT1 modification. Residue S80 is modified to Phosphoserine. Residues 100–206 constitute a DNA-binding region (fork-head); that stretch reads WGNLSYADLI…ETSRYEKRRG (107 aa). Disordered stretches follow at residues 187–210, 222–283, 319–364, and 580–600; these read KSVR…RAKK, GLND…LEPD, QQGF…TPGY, and LNAR…SWVH. S195 bears the Phosphoserine; by PKB/AKT1 mark. 2 stretches are compositionally biased toward polar residues: residues 226–235 and 261–270; these read ATPSPSSSVS and RASSNASSCG. S264 carries the post-translational modification Phosphoserine; by PKB/AKT1. Phosphoserine occurs at positions 267, 268, and 273. The span at 330 to 342 shows a compositional bias: pro residues; the sequence is TQPPPPPYQPPQP. Positions 343 to 354 are enriched in low complexity; that stretch reads QQQQQQGQQPSP.

As to quaternary structure, interacts with melt.

The protein localises to the cytoplasm. Its subcellular location is the nucleus. Its function is as follows. Transcription factor involved in the regulation of the insulin signaling pathway. Consistently activates both the downstream target Thor\d4EBP and the feedback control target InR. Involved in negative regulation of the cell cycle, modulating cell growth and proliferation. In response to cellular stresses, such as nutrient deprivation or increased levels of reactive oxygen species, foxo is activated and inhibits growth through the action of target genes such as Thor. Foxo activated in the adult fat body can regulate lifespan in adults; an insulin peptide itself may function as one secondary messenger of insulin-regulated aging. Also regulates Lip4, homolog of human acid lipases, thereby acting as a key modulator of lipid metabolism by insulin signaling and integrates insulin responses to glucose and lipid homeostasis. This chain is Forkhead box protein O, found in Drosophila ananassae (Fruit fly).